Reading from the N-terminus, the 150-residue chain is Large ribosomal subunit protein bL9 (150 aa).

Belongs to the bacterial ribosomal protein bL9 family.

Functionally, binds to the 23S rRNA. This Ruthia magnifica subsp. Calyptogena magnifica protein is Large ribosomal subunit protein bL9.